Consider the following 150-residue polypeptide: Ribosome maturation factor RimP (150 aa).

It belongs to the RimP family.

The protein localises to the cytoplasm. In terms of biological role, required for maturation of 30S ribosomal subunits. This Francisella tularensis subsp. mediasiatica (strain FSC147) protein is Ribosome maturation factor RimP.